Reading from the N-terminus, the 71-residue chain is Protein PSY3 (71 aa).

The first 25 residues, 1–25 (MGYSSSSRIGLCLFLFFTFALLSSA), serve as a signal peptide directing secretion. A propeptide spanning residues 26 to 49 (RISLSFSENEMTVVPERSLMVSTN) is cleaved from the precursor. Residues 47–71 (STNDYSDPTANGRHDPPRGGRGRRR) form a disordered region. A Sulfotyrosine modification is found at Tyr-51. Position 63 is a 4-hydroxyproline (Pro-63). Pro-63 carries O-linked (Ara...) hydroxyproline glycosylation. Residues 66–71 (GRGRRR) constitute a propeptide that is removed on maturation.

The protein belongs to the sulfated-peptide plant hormone family. The sulfation and the glycosylation are required for full activity.

It is found in the secreted. Promotes cellular proliferation and expansion. The sequence is that of Protein PSY3 (PSY3) from Arabidopsis thaliana (Mouse-ear cress).